The following is an 88-amino-acid chain: Gas vesicle protein A2 (88 aa).

The protein belongs to the gas vesicle GvpA family. In terms of assembly, the gas vesicle shell is 2 nm thick and consists of a single layer of this protein. It forms helical ribs nearly perpendicular to the long axis of the vesicle.

The protein resides in the gas vesicle shell. Gas vesicles are hollow, gas filled proteinaceous nanostructures found in some microorganisms. During planktonic growth they allow positioning of the organism at a favorable depth for light or nutrient acquisition. GvpA forms the protein shell. In terms of biological role, it is not clear if the 2 type A proteins in this organism are functionally redundant. Functionally, when a minimal gvp locus (gvpA2-gvpR-gvpN-gvpF-gvpG-gvpL-gvpS-gvpK-gvpJ-gvpT-gvpU, called pNL29) is expressed in E.coli gas vesicles are made. In Priestia megaterium (Bacillus megaterium), this protein is Gas vesicle protein A2.